We begin with the raw amino-acid sequence, 129 residues long: M-zodatoxin-Lt8c (129 aa).

The N-terminal stretch at 1–20 (MKYFVVALALVAAFACIAES) is a signal peptide. Residues 21-60 (KPAESEHELAEVEEENELADLEDAVWLEHLADLSDLEEAR) constitute a propeptide that is removed on maturation. A Processing quadruplet motif motif is present at residues 57–60 (EEAR).

Post-translationally, cleavage of the propeptide depends on the processing quadruplet motif (XXXR, with at least one of X being E). As to expression, expressed by the venom gland.

It localises to the secreted. Insecticidal, cytolytic and antimicrobial peptide. Forms voltage-dependent, ion-permeable channels in membranes. At high concentration causes cell membrane lysis. In Lachesana tarabaevi (Spider), this protein is M-zodatoxin-Lt8c (cit 1-3).